The following is a 338-amino-acid chain: Ketol-acid reductoisomerase (NADP(+)) (338 aa).

One can recognise a KARI N-terminal Rossmann domain in the interval 1–181 (MKVFYDKDCD…GGGRTGIIET (181 aa)). Residues 24 to 27 (YGSQ), R47, S50, T52, and 82 to 85 (DEFQ) each bind NADP(+). Residue H107 is part of the active site. G133 provides a ligand contact to NADP(+). Positions 182-327 (TFKDETETDL…EQLRSMMPWI (146 aa)) constitute a KARI C-terminal knotted domain. Positions 190, 194, 226, and 230 each coordinate Mg(2+). Substrate is bound at residue S251.

Belongs to the ketol-acid reductoisomerase family. It depends on Mg(2+) as a cofactor.

It catalyses the reaction (2R)-2,3-dihydroxy-3-methylbutanoate + NADP(+) = (2S)-2-acetolactate + NADPH + H(+). It carries out the reaction (2R,3R)-2,3-dihydroxy-3-methylpentanoate + NADP(+) = (S)-2-ethyl-2-hydroxy-3-oxobutanoate + NADPH + H(+). It participates in amino-acid biosynthesis; L-isoleucine biosynthesis; L-isoleucine from 2-oxobutanoate: step 2/4. Its pathway is amino-acid biosynthesis; L-valine biosynthesis; L-valine from pyruvate: step 2/4. Its function is as follows. Involved in the biosynthesis of branched-chain amino acids (BCAA). Catalyzes an alkyl-migration followed by a ketol-acid reduction of (S)-2-acetolactate (S2AL) to yield (R)-2,3-dihydroxy-isovalerate. In the isomerase reaction, S2AL is rearranged via a Mg-dependent methyl migration to produce 3-hydroxy-3-methyl-2-ketobutyrate (HMKB). In the reductase reaction, this 2-ketoacid undergoes a metal-dependent reduction by NADPH to yield (R)-2,3-dihydroxy-isovalerate. This is Ketol-acid reductoisomerase (NADP(+)) from Pseudomonas entomophila (strain L48).